A 170-amino-acid chain; its full sequence is Superoxide dismutase [Fe] (170 aa).

Fe cation is bound by residues H27, H81, D163, and H167.

The protein belongs to the iron/manganese superoxide dismutase family. As to quaternary structure, homodimer. Fe cation is required as a cofactor.

The catalysed reaction is 2 superoxide + 2 H(+) = H2O2 + O2. Its function is as follows. Destroys superoxide anion radicals which are normally produced within the cells and which are toxic to biological systems. The chain is Superoxide dismutase [Fe] (sodA) from Raoultella planticola (Klebsiella planticola).